A 594-amino-acid polypeptide reads, in one-letter code: NADH-quinone oxidoreductase subunit C/D (594 aa).

The interval 1–185 is NADH dehydrogenase I subunit C; it reads MTTGSALYIP…DPFSLNLAKQ (185 aa). The NADH dehydrogenase I subunit D stretch occupies residues 209–594; it reads DYMFLNLGPN…IDFVMADVDR (386 aa).

It in the N-terminal section; belongs to the complex I 30 kDa subunit family. In the C-terminal section; belongs to the complex I 49 kDa subunit family. As to quaternary structure, NDH-1 is composed of 13 different subunits. Subunits NuoB, CD, E, F, and G constitute the peripheral sector of the complex.

It is found in the cell inner membrane. The catalysed reaction is a quinone + NADH + 5 H(+)(in) = a quinol + NAD(+) + 4 H(+)(out). Its function is as follows. NDH-1 shuttles electrons from NADH, via FMN and iron-sulfur (Fe-S) centers, to quinones in the respiratory chain. The immediate electron acceptor for the enzyme in this species is believed to be ubiquinone. Couples the redox reaction to proton translocation (for every two electrons transferred, four hydrogen ions are translocated across the cytoplasmic membrane), and thus conserves the redox energy in a proton gradient. The sequence is that of NADH-quinone oxidoreductase subunit C/D from Pseudomonas fluorescens (strain Pf0-1).